Reading from the N-terminus, the 233-residue chain is Peptidyl-tRNA hydrolase (233 aa).

Y14 provides a ligand contact to tRNA. Catalysis depends on H19, which acts as the Proton acceptor. Residues F64, N66, and N112 each coordinate tRNA. Residues 187-233 (VSPRRSGTGQKGKDKPPAPAKQQATATKAEPEPDTRSALQKLMERFK) form a disordered region.

It belongs to the PTH family. Monomer.

The protein resides in the cytoplasm. It carries out the reaction an N-acyl-L-alpha-aminoacyl-tRNA + H2O = an N-acyl-L-amino acid + a tRNA + H(+). Hydrolyzes ribosome-free peptidyl-tRNAs (with 1 or more amino acids incorporated), which drop off the ribosome during protein synthesis, or as a result of ribosome stalling. Its function is as follows. Catalyzes the release of premature peptidyl moieties from peptidyl-tRNA molecules trapped in stalled 50S ribosomal subunits, and thus maintains levels of free tRNAs and 50S ribosomes. This is Peptidyl-tRNA hydrolase from Roseobacter denitrificans (strain ATCC 33942 / OCh 114) (Erythrobacter sp. (strain OCh 114)).